We begin with the raw amino-acid sequence, 504 residues long: Nuclear hormone receptor family member nhr-80 (504 aa).

Positions 27-103 form a DNA-binding region, nuclear receptor; it reads STRCLICSAQ…NGMKPGGVQP (77 aa). 2 consecutive NR C4-type zinc fingers follow at residues 30 to 50 and 66 to 86; these read CLIC…CSAC and CITG…CRSC. A compositionally biased stretch (low complexity) spans 177-192; that stretch reads SSSTSFSASTTTNYST. Positions 177–199 are disordered; sequence SSSTSFSASTTTNYSTPGPSPMA. In terms of domain architecture, NR LBD spans 214 to 466; sequence EEMKLGERRR…KLVLQLLNLD (253 aa). Residues 455–466 form an AF-2 region; the sequence is LDKLVLQLLNLD.

Belongs to the nuclear hormone receptor family. Interacts with nuclear hormone receptor nhr-49; the interaction is direct. As to expression, expressed in the intestine and in some head and tail neurons, as well as the ventral nerve cord.

The protein resides in the nucleus. Functionally, transcription factor. Binds to regulatory elements and regulates transcription of target genes, including acyltransferase dgat-2. As part of a lysosome-to-nucleus retrograde lipid signaling pathway, acts as a direct nuclear receptor of oleoylethanolamide (OEA) and, acting in concert with nuclear hormone receptor nhr-49, activates the transcription of genes promoting longevity and mitochondrial beta-oxidation. Required to modulate expression of delta-9 fatty acid desaturases, thereby regulating lipid metabolism; in some contexts, acting in concert with nhr-49. Involved in modulation of lipid metabolism in response to the citrate-induced mitochondrial unfolded protein response (mtUPR), acting downstream of transcription factor dve-1 and ubiquitin-like protein 5. Plays a role in modulating mitochondrial morphology and function. Involved in positively modulating life-span in a germline-dependent manner, acting in concert with nuclear hormone receptor daf-12. Plays a role in transgenerational lipid accumulation in response to a high-fat diet. The sequence is that of Nuclear hormone receptor family member nhr-80 from Caenorhabditis elegans.